The primary structure comprises 613 residues: Chaperone protein dnaK (613 aa).

Belongs to the heat shock protein 70 family.

Its subcellular location is the plastid. The protein resides in the chloroplast. In terms of biological role, acts as a chaperone. This Phaeodactylum tricornutum (strain CCAP 1055/1) protein is Chaperone protein dnaK.